Reading from the N-terminus, the 314-residue chain is MFQPAEPGQEWAMEGPRDALKKERLLDDRHDSGLDSMKDEEYEQMVKELREIRLEPQEAPRGAEPWKQQLTEDGDSFLHLAIIHEEKALTMEVVRQVKGDLAFLNFQNNLQQTPLHLAVITNQPEIAEALLEAGCDPELRDFRGNTPLHLACEQGCLASVGVLTQPRGTQHLHSILQATNYNGHTCLHLASIHGYLGIVELLVSLGADVNAQEPCNGRTALHLAVDLQNPDLVSLLLKCGADVNRVTYQGYSPYQLTWGRPSTRIQQQLGQLTLENLQMLPESEDEESYDTESEFTEDELPYDDCVLGGQRLTL.

Residues 1–41 (MFQPAEPGQEWAMEGPRDALKKERLLDDRHDSGLDSMKDEE) are disordered. Basic and acidic residues predominate over residues 15–41 (GPRDALKKERLLDDRHDSGLDSMKDEE). Lysine 21 is covalently cross-linked (Glycyl lysine isopeptide (Lys-Gly) (interchain with G-Cter in SUMO); alternate). Residue lysine 21 forms a Glycyl lysine isopeptide (Lys-Gly) (interchain with G-Cter in ubiquitin); alternate linkage. Lysine 22 participates in a covalent cross-link: Glycyl lysine isopeptide (Lys-Gly) (interchain with G-Cter in ubiquitin). A Destruction motif motif is present at residues 30-36 (HDSGLDS). Position 32 is a phosphoserine; by IKKA and IKKB (serine 32). Residue serine 36 is modified to Phosphoserine; by IKKA, IKKB, IKKE and TBK1. Tyrosine 42 bears the Phosphotyrosine; by Tyr-kinases mark. The short motif at 45 to 54 (MVKELREIRL) is the Nuclear export signal element. The Nuclear import signal signature appears at 110–120 (LQQTPLHLAVI). ANK repeat units follow at residues 110–139 (LQQT…DPEL), 143–172 (RGNT…TQHL), 182–211 (NGHT…DVNA), and 216–245 (NGRT…DVNR). (3S)-3-hydroxyasparagine; by HIF1AN occurs at positions 210 and 244. Phosphoserine; by CK2 is present on residues serine 283 and serine 288. Phosphothreonine; by CK2 is present on threonine 291. Serine 293 bears the Phosphoserine; by CK2 mark. Position 296 is a phosphothreonine (threonine 296).

Belongs to the NF-kappa-B inhibitor family. As to quaternary structure, interacts with RELA; the interaction requires the nuclear import signal. Part of a 70-90 kDa complex at least consisting of CHUK, IKBKB, NFKBIA, RELA, ELP1 and MAP3K14. Interacts with NKIRAS1 and NKIRAS2. Interacts with RWDD3; the interaction enhances sumoylation. Interacts with PRMT2. Interacts with PRKACA in platelets; this interaction is disrupted by thrombin and collagen. Interacts with MEFV. Interacts with DDRGK1; positively regulates NFKBIA phosphorylation and degradation. Interacts with HNRNPA2B1; the interaction may be mediated by the RRM2 domain of HNRNPA2B1, and HNRNPA2B1 may interact simultaneously with FAM76B and either NFKBIA or NFKBIE to form a complex. Post-translationally, phosphorylated at Ser-32 and Ser-36 by IKKA/CHUK and IKKB/IKBKB; disables inhibition of NF-kappa-B DNA-binding activity. Phosphorylation at positions 32 and 36 is prerequisite to recognition by the SCF(FBXW11) and SCF(BTRC) complexes, leading to polyubiquitination and subsequent degradation. In terms of processing, polyubiquitinated at Lys-21 and/or Lys-22 following phosphorylation at Ser-32 and Ser-36. Monoubiquitinated at Lys-21 and/or Lys-22 by UBE2D3. Ubiquitin chain elongation is then performed by CDC34 in cooperation with the SCF(FBXW11) E3 ligase complex, building ubiquitin chains from the UBE2D3-primed NFKBIA-linked ubiquitin. The resulting polyubiquitination leads to protein degradation. Also ubiquitinated by the SCF(BTRC) complex following stimulus-dependent phosphorylation at Ser-32 and Ser-36. Deubiquitinated by USP38, leading to NF-kappa-B inhibition. Sumoylated; sumoylation requires the presence of the nuclear import signal. Sumoylation blocks ubiquitination and proteasome-mediated degradation of the protein thereby increasing the protein stability. Post-translationally, hydroxylated by HIF1AN.

The protein resides in the cytoplasm. It localises to the nucleus. Its function is as follows. Inhibits the activity of dimeric NF-kappa-B/REL complexes by trapping REL (RELA/p65 and NFKB1/p50) dimers in the cytoplasm by masking their nuclear localization signals. On cellular stimulation by immune and pro-inflammatory responses, becomes phosphorylated promoting ubiquitination and degradation, enabling the dimeric RELA to translocate to the nucleus and activate transcription. This Sus scrofa (Pig) protein is NF-kappa-B inhibitor alpha (NFKBIA).